The sequence spans 329 residues: Anthranilate phosphoribosyltransferase (329 aa).

Residues Gly78, 81–82, 88–91, 106–114, and Ser118 each bind 5-phospho-alpha-D-ribose 1-diphosphate; these read GD, NLST, and KHGNRAASS. Gly78 serves as a coordination point for anthranilate. Residue Ser90 participates in Mg(2+) binding. Asn109 provides a ligand contact to anthranilate. Arg164 is an anthranilate binding site. Asp221 and Glu222 together coordinate Mg(2+).

Belongs to the anthranilate phosphoribosyltransferase family. Homodimer. Requires Mg(2+) as cofactor.

The catalysed reaction is N-(5-phospho-beta-D-ribosyl)anthranilate + diphosphate = 5-phospho-alpha-D-ribose 1-diphosphate + anthranilate. Its pathway is amino-acid biosynthesis; L-tryptophan biosynthesis; L-tryptophan from chorismate: step 2/5. Its function is as follows. Catalyzes the transfer of the phosphoribosyl group of 5-phosphorylribose-1-pyrophosphate (PRPP) to anthranilate to yield N-(5'-phosphoribosyl)-anthranilate (PRA). This chain is Anthranilate phosphoribosyltransferase, found in Thermus thermophilus (strain ATCC BAA-163 / DSM 7039 / HB27).